Reading from the N-terminus, the 490-residue chain is GTPase Der (490 aa).

2 EngA-type G domains span residues 3–166 (PVVA…AEAM) and 200–373 (IKLA…DSAT). Residues 9 to 16 (GRPNVGKS), 56 to 60 (DTGGI), 118 to 121 (NKVD), 206 to 213 (GKPNVGKS), 253 to 257 (DTAGV), and 318 to 321 (NKWD) contribute to the GTP site. Residues 374–458 (RRVSTSMLTR…PIQIRFQDGG (85 aa)) enclose the KH-like domain.

Belongs to the TRAFAC class TrmE-Era-EngA-EngB-Septin-like GTPase superfamily. EngA (Der) GTPase family. Associates with the 50S ribosomal subunit.

Its function is as follows. GTPase that plays an essential role in the late steps of ribosome biogenesis. The chain is GTPase Der from Shewanella piezotolerans (strain WP3 / JCM 13877).